The primary structure comprises 108 residues: Phosphoribosyl-ATP pyrophosphatase (108 aa).

It belongs to the PRA-PH family.

It is found in the cytoplasm. It catalyses the reaction 1-(5-phospho-beta-D-ribosyl)-ATP + H2O = 1-(5-phospho-beta-D-ribosyl)-5'-AMP + diphosphate + H(+). Its pathway is amino-acid biosynthesis; L-histidine biosynthesis; L-histidine from 5-phospho-alpha-D-ribose 1-diphosphate: step 2/9. This is Phosphoribosyl-ATP pyrophosphatase from Thiobacillus denitrificans (strain ATCC 25259 / T1).